The primary structure comprises 117 residues: Biogenesis of lysosome-related organelles complex 1 subunit BLS1 (117 aa).

The disordered stretch occupies residues glutamate 97–aspartate 117.

It belongs to the BLOC1S1 family. In terms of assembly, component of the biogenesis of lysosome-related organelles complex-1 (BLOC-1).

The protein resides in the endosome. Component of the biogenesis of lysosome-related organelles complex-1 (BLOC-1), a complex involved in endosomal cargo sorting. The protein is Biogenesis of lysosome-related organelles complex 1 subunit BLS1 (BLS1) of Eremothecium gossypii (strain ATCC 10895 / CBS 109.51 / FGSC 9923 / NRRL Y-1056) (Yeast).